The chain runs to 394 residues: S-adenosylmethionine synthase (394 aa).

His-18 provides a ligand contact to ATP. Position 20 (Asp-20) interacts with Mg(2+). Glu-46 contacts K(+). Positions 59 and 104 each coordinate L-methionine. The tract at residues Gln-104–Ala-114 is flexible loop. ATP-binding positions include Asp-174 to Lys-176, Lys-240 to Phe-241, Asp-249, Arg-255 to Lys-256, Ala-272, and Lys-276. Asp-249 serves as a coordination point for L-methionine. Position 280 (Lys-280) interacts with L-methionine.

It belongs to the AdoMet synthase family. Homotetramer; dimer of dimers. Mg(2+) is required as a cofactor. Requires K(+) as cofactor.

Its subcellular location is the cytoplasm. It carries out the reaction L-methionine + ATP + H2O = S-adenosyl-L-methionine + phosphate + diphosphate. Its pathway is amino-acid biosynthesis; S-adenosyl-L-methionine biosynthesis; S-adenosyl-L-methionine from L-methionine: step 1/1. In terms of biological role, catalyzes the formation of S-adenosylmethionine (AdoMet) from methionine and ATP. The overall synthetic reaction is composed of two sequential steps, AdoMet formation and the subsequent tripolyphosphate hydrolysis which occurs prior to release of AdoMet from the enzyme. In Akkermansia muciniphila (strain ATCC BAA-835 / DSM 22959 / JCM 33894 / BCRC 81048 / CCUG 64013 / CIP 107961 / Muc), this protein is S-adenosylmethionine synthase.